Consider the following 483-residue polypeptide: E3 ubiquitin-protein ligase TRIM50 (483 aa).

The RING-type zinc-finger motif lies at 16-57; sequence CPICLEVFKEPLMLQCGHSYCKDCLDNLSQHLDSELCCPVCR. The B box-type zinc-finger motif lies at 84 to 125; the sequence is IEPTVCVHHRNPLSLFCEKDQEFICGLCGLLGSHQHHRVTPV. Positions 89, 92, 111, and 117 each coordinate Zn(2+). Coiled coils occupy residues 127-169 and 203-236; these read TVYS…NESD and GLVASLDMQLEQAQGTQERLAQAEQVLEQFGNES. The B30.2/SPRY domain occupies 275–474; sequence DIKLTVWKRL…LPMVLPPPSG (200 aa). Lys-372 bears the N6-acetyllysine mark.

Belongs to the TRIM/RBCC family. Can form dimers and trimers. Interacts with several E2 ubiquitin-conjugating enzymes, including UBE2L6, UBE2E1, UBE2E3. No interaction with UBE2H. Interacts with BECN1. Interacts with SQSTM1. Interacts with NLRP3. Post-translationally, auto-ubiquitinated. In terms of processing, acetylated by EP300 and KAT2B. HDAC6 drives TRIM50 deacetylation. Acetylation antagonizes with TRIM50 ubiquitination. Expressed in the stomach.

It is found in the cytoplasm. It carries out the reaction S-ubiquitinyl-[E2 ubiquitin-conjugating enzyme]-L-cysteine + [acceptor protein]-L-lysine = [E2 ubiquitin-conjugating enzyme]-L-cysteine + N(6)-ubiquitinyl-[acceptor protein]-L-lysine.. In terms of biological role, E3 ubiquitin-protein ligase that ubiquitinates Beclin-1/BECN1 in a 'Lys-63'-dependent manner enhancing its binding to ULK1. In turn, promotes starvation-induced autophagy activation. Also interacts with p62/SQSTM1 protein and thereby induces the formation and the autophagy clearance of aggresome-associated polyubiquitinated proteins through HDAC6 interaction. Also promotes NLRP3 inflammasome activation by directly inducing NLRP3 oligomerization independent of its E3 ligase function. The chain is E3 ubiquitin-protein ligase TRIM50 (Trim50) from Mus musculus (Mouse).